Consider the following 83-residue polypeptide: UPF0729 protein CBG02799 (83 aa).

Residues 51–83 (QEKKEEEEEKEKSCCSTEAENTTEVTTETKKDQ) form a disordered region. A compositionally biased stretch (low complexity) spans 67–76 (TEAENTTEVT).

Belongs to the UPF0729 family.

The protein is UPF0729 protein CBG02799 of Caenorhabditis briggsae.